The primary structure comprises 115 residues: NADH-ubiquinone oxidoreductase chain 3 (115 aa).

3 helical membrane passes run 4-24, 55-75, and 84-104; these read LMVLTVNMMLSTCLILIAFWL, FFLVAITFLLFDLEIALLLPL, and INIMTLTSFILVSVLALGLAY.

The protein belongs to the complex I subunit 3 family. Core subunit of respiratory chain NADH dehydrogenase (Complex I) which is composed of 45 different subunits. Interacts with TMEM186. Interacts with TMEM242.

It localises to the mitochondrion membrane. The catalysed reaction is a ubiquinone + NADH + 5 H(+)(in) = a ubiquinol + NAD(+) + 4 H(+)(out). Its function is as follows. Core subunit of the mitochondrial membrane respiratory chain NADH dehydrogenase (Complex I) that is believed to belong to the minimal assembly required for catalysis. Complex I functions in the transfer of electrons from NADH to the respiratory chain. The immediate electron acceptor for the enzyme is believed to be ubiquinone. The polypeptide is NADH-ubiquinone oxidoreductase chain 3 (Onychomys leucogaster (Northern grasshopper mouse)).